A 254-amino-acid chain; its full sequence is Distal membrane-arm assembly complex protein 2 (254 aa).

S250 bears the Phosphoserine mark.

This sequence belongs to the ATP synthase subunit s family. Interacts with incompletely assembled mitochondrial NADH:ubiquinone oxidoreductase complex (complex I).

The protein localises to the mitochondrion. In terms of biological role, required for the assembly of the mitochondrial NADH:ubiquinone oxidoreductase complex (complex I). Involved in the assembly of the distal region of complex I. This chain is Distal membrane-arm assembly complex protein 2, found in Rattus norvegicus (Rat).